Consider the following 330-residue polypeptide: Spondin-2 (330 aa).

Positions 1 to 25 (MENVSFSLDRTLWVFLLAMLGSTAG) are cleaved as a signal peptide. Residues 30–220 (GESVCTARPL…EITASSPSHP (191 aa)) form the Spondin domain. An intrachain disulfide couples Cys34 to Cys170. Residue Glu140 participates in a divalent metal cation binding. Ca(2+)-binding residues include Asp159, Asp187, and Asp191. The 55-residue stretch at 276–330 (DCEVSLWSSWGLCGGPCGKLGAKSRTRYVRVQPANNGTPCPELEEEAECAPDNCV) folds into the TSP type-1 domain. A glycan (C-linked (Man) tryptophan) is linked at Trp282.

Monomer. Interacts with integrin. In terms of tissue distribution, abundantly expressed in the developing hippocampus.

The protein localises to the secreted. Its subcellular location is the extracellular space. The protein resides in the extracellular matrix. Cell adhesion protein that promotes adhesion and outgrowth of hippocampal embryonic neurons. Binds directly to bacteria and their components and functions as an opsonin for macrophage phagocytosis of bacteria. Essential in the initiation of the innate immune response and represents a unique pattern-recognition molecule in the ECM for microbial pathogens. The protein is Spondin-2 (Spon2) of Rattus norvegicus (Rat).